We begin with the raw amino-acid sequence, 318 residues long: sn-1 stearoyl-lipid 9-desaturase (318 aa).

Transmembrane regions (helical) follow at residues 56–76 and 80–100; these read VIFF…PQFF and AVGM…TLGF. A Histidine box-1 motif is present at residues 101–106; sequence HRCISH. A helical transmembrane segment spans residues 117 to 137; the sequence is YIFVICGTLACQGGVFEWVGL. The Histidine box-2 motif lies at 138 to 142; it reads HRMHH. Residues 201-221 traverse the membrane as a helical segment; it reads VALGLILFALGGWPFVIWGIF. Positions 271–275 match the Histidine box-3 motif; that stretch reads HHAYQ.

This sequence belongs to the fatty acid desaturase type 2 family. Fe(2+) is required as a cofactor.

The protein resides in the cellular thylakoid membrane. The enzyme catalyses a 1-octadecanoyl 2-acyl-glycerolipid + 2 reduced [2Fe-2S]-[ferredoxin] + O2 + 2 H(+) = a 1-[(9Z)-octadecenoyl]-2-acyl-glycerolipid + 2 oxidized [2Fe-2S]-[ferredoxin] + 2 H2O. The protein operates within lipid metabolism; polyunsaturated fatty acid biosynthesis. Functionally, desaturase involved in fatty acid biosynthesis. Introduces a double bond at carbon 9 of stearoyl groups (18:0) attached to the sn-1 position of the glycerol moiety of membrane glycerolipids. Does not desaturate palmitic acid (16:0), palmitoleic acid (16:1) and cis-vaccenic acid (18:1). This Synechocystis sp. (strain ATCC 27184 / PCC 6803 / Kazusa) protein is sn-1 stearoyl-lipid 9-desaturase.